The following is a 280-amino-acid chain: 2-dehydro-3-deoxyphosphooctonate aldolase (280 aa).

This sequence belongs to the KdsA family.

Its subcellular location is the cytoplasm. It carries out the reaction D-arabinose 5-phosphate + phosphoenolpyruvate + H2O = 3-deoxy-alpha-D-manno-2-octulosonate-8-phosphate + phosphate. It functions in the pathway carbohydrate biosynthesis; 3-deoxy-D-manno-octulosonate biosynthesis; 3-deoxy-D-manno-octulosonate from D-ribulose 5-phosphate: step 2/3. It participates in bacterial outer membrane biogenesis; lipopolysaccharide biosynthesis. This is 2-dehydro-3-deoxyphosphooctonate aldolase from Coxiella burnetii (strain CbuG_Q212) (Coxiella burnetii (strain Q212)).